Reading from the N-terminus, the 348-residue chain is Probable tRNA pseudouridine synthase B (348 aa).

The active-site Nucleophile is aspartate 93. The region spanning 260-335 (LKKIYILDSA…IAVDIERVFM (76 aa)) is the PUA domain.

This sequence belongs to the pseudouridine synthase TruB family. Type 2 subfamily.

It catalyses the reaction uridine(55) in tRNA = pseudouridine(55) in tRNA. Could be responsible for synthesis of pseudouridine from uracil-55 in the psi GC loop of transfer RNAs. The chain is Probable tRNA pseudouridine synthase B from Nanoarchaeum equitans (strain Kin4-M).